Consider the following 242-residue polypeptide: Zinc-finger homeodomain protein 11 (242 aa).

The ZF-HD dimerization-type; degenerate zinc finger occupies 31 to 82; it reads YKECLKNHAANLGGHALDGCGEFMPSPTATSTDPSSLRCAACGCHRNFHRRD. 2 disordered regions span residues 83–109 and 135–161; these read PSEN…SRHV and PGPS…RTRT. The segment at residues 156-213 is a DNA-binding region (homeobox; atypical); the sequence is RKRTRTKFTPEQKIKMRAFAEKAGWKINGCDEKSVREFCNEVGIERGVLKVWMHNNKY.

Homo- and heterodimer with other ZFHD proteins. Interacts with HIPP20, HIPP21, HIPP22, HIPP23, HIPP24, HIPP26, HIPP27, HIPP30 and MED25 (via ACID domain). Interacts with NAC019, NAC055 and NAC072 (via NAC binding domain). Binds to ZHD1, ZHD2, ZHD3, ZHD4, ZHD5, ZHD6, ZHD7, ZHD8, ZHD9, ZHD12, ZHD13 and ZHD14. In terms of tissue distribution, expressed in roots, inflorescences, open flowers and seeds. Detected in stems and seedlings.

The protein resides in the nucleus. Its function is as follows. Transcription factor involved in the up-regulation of several stress-inducible genes. Acts as a transcriptional activator by interacting with MED25 and NAC proteins. Involved in increased drought tolerance. The chain is Zinc-finger homeodomain protein 11 (ZHD11) from Arabidopsis thaliana (Mouse-ear cress).